We begin with the raw amino-acid sequence, 245 residues long: D-aminoacyl-tRNA deacylase (245 aa).

Belongs to the DtdA deacylase family. In terms of assembly, monomer. Zn(2+) serves as cofactor.

The catalysed reaction is a D-aminoacyl-tRNA + H2O = a tRNA + a D-alpha-amino acid + H(+). It carries out the reaction glycyl-tRNA(Ala) + H2O = tRNA(Ala) + glycine + H(+). In terms of biological role, D-aminoacyl-tRNA deacylase with broad substrate specificity. By recycling D-aminoacyl-tRNA to D-amino acids and free tRNA molecules, this enzyme counteracts the toxicity associated with the formation of D-aminoacyl-tRNA entities in vivo. In Ignicoccus hospitalis (strain KIN4/I / DSM 18386 / JCM 14125), this protein is D-aminoacyl-tRNA deacylase.